The chain runs to 348 residues: S-adenosylmethionine:tRNA ribosyltransferase-isomerase (348 aa).

This sequence belongs to the QueA family. As to quaternary structure, monomer.

The protein localises to the cytoplasm. It catalyses the reaction 7-aminomethyl-7-carbaguanosine(34) in tRNA + S-adenosyl-L-methionine = epoxyqueuosine(34) in tRNA + adenine + L-methionine + 2 H(+). The protein operates within tRNA modification; tRNA-queuosine biosynthesis. Transfers and isomerizes the ribose moiety from AdoMet to the 7-aminomethyl group of 7-deazaguanine (preQ1-tRNA) to give epoxyqueuosine (oQ-tRNA). The protein is S-adenosylmethionine:tRNA ribosyltransferase-isomerase of Tolumonas auensis (strain DSM 9187 / NBRC 110442 / TA 4).